The primary structure comprises 569 residues: Endo-1,4-beta-xylanase 5 (569 aa).

The signal sequence occupies residues 1-25; that stretch reads MKNINNGFFLCMLLLLWCFVHSGIS. 3 N-linked (GlcNAc...) asparagine glycosylation sites follow: asparagine 197, asparagine 261, and asparagine 307. Residues 209-500 form the GH10 domain; that stretch reads EQTKPSFLLG…NTATGDVIDK (292 aa). The active-site Proton donor is the glutamate 332. Asparagine 346 carries N-linked (GlcNAc...) asparagine glycosylation. Catalysis depends on glutamate 439, which acts as the Nucleophile. 3 N-linked (GlcNAc...) asparagine glycosylation sites follow: asparagine 490, asparagine 536, and asparagine 544.

This sequence belongs to the glycosyl hydrolase 10 (cellulase F) family.

The catalysed reaction is Endohydrolysis of (1-&gt;4)-beta-D-xylosidic linkages in xylans.. The protein operates within glycan degradation; xylan degradation. Binds to and hydrolyzes insoluble and soluble xylan substrates. The protein is Endo-1,4-beta-xylanase 5 of Arabidopsis thaliana (Mouse-ear cress).